The following is a 541-amino-acid chain: Transcription factor STP2 (541 aa).

An i region spans residues Val-13–Asn-32. The interval Asp-35–Asp-58 is disordered. The interval Leu-73–Ser-105 is II. The segment at Tyr-204–His-226 adopts a C2H2-type 1 zinc-finger fold. A C2H2-type 2; atypical zinc finger spans residues Tyr-232 to His-267. A C2H2-type 3; atypical zinc finger spans residues Gly-284 to Cys-309. Residues Ser-452–Ser-462 show a composition bias toward low complexity. Residues Ser-452 to Ser-497 form a disordered region. Residues Pro-465 to Ser-482 show a composition bias toward polar residues.

In terms of assembly, interacts (via Region II) with SSY5; protease component of the SPS-sensor. Post-translationally, activated by the amino acid-induced proteolytic removal of an N-terminal inhibitory domain by serine protease SSY5, an intrinsic component of the SPS-sensor. Processing requires at least 2 components of the SCF(GRR1) ubiquitin ligase complex, namely the F-box protein GRR1 and the E2 enzyme CDC34, but does not depend on the proteasome. Processing is negatively regulated by the protein phosphatase 2A regulatory subunit RTS1.

Its subcellular location is the cell membrane. It localises to the nucleus. Transcription factor involved in the regulation of gene expression in response to extracellular amino acid levels. Synthesized as latent cytoplasmic precursor, which, upon a signal initiated by the plasma membrane SPS (SSY1-PTR3-SSY5) amino acid sensor system, becomes proteolytically activated and relocates to the nucleus, where it induces the expression of SPS-sensor-regulated genes, including the amino-acid permeases BAP2 and BAP3. Binding to promoters is facilitated by DAL81. Involved in the repression of genes subject to nitrogen catabolite repression and genes involved in stress response. Negatively regulated by inner nuclear membrane proteins ASI1, ASI2 and ASI3, which prevent unprocessed precursor forms that escape cytoplasmic anchoring from inducing SPS-sensor-regulated genes. This Saccharomyces cerevisiae (strain ATCC 204508 / S288c) (Baker's yeast) protein is Transcription factor STP2 (STP2).